The chain runs to 301 residues: Cell division protein kinase 2 homolog CRK1 (301 aa).

The 293-residue stretch at 5-297 (YERQEKIGEG…AADALNHPYF (293 aa)) folds into the Protein kinase domain. Residues 11–19 (IGEGTYGVV) and Lys34 each bind ATP. Residue Asp127 is the Proton acceptor of the active site. Thr160 carries the phosphothreonine; by CAK modification.

Belongs to the protein kinase superfamily. CMGC Ser/Thr protein kinase family. CDC2/CDKX subfamily. Forms a stable but non-covalent complex with a regulatory subunit and with a cyclin.

The enzyme catalyses [DNA-directed RNA polymerase] + ATP = phospho-[DNA-directed RNA polymerase] + ADP + H(+). Phosphorylation at Thr-15 or Tyr-16 inactivates the enzyme, while phosphorylation at Thr-160 activates it. Functionally, may be involved in some stage-specific role in the promastigote cell cycle. In Leishmania mexicana, this protein is Cell division protein kinase 2 homolog CRK1 (CRK1).